A 263-amino-acid chain; its full sequence is 3-deoxy-manno-octulosonate cytidylyltransferase (263 aa).

This sequence belongs to the KdsB family.

Its subcellular location is the cytoplasm. The catalysed reaction is 3-deoxy-alpha-D-manno-oct-2-ulosonate + CTP = CMP-3-deoxy-beta-D-manno-octulosonate + diphosphate. It participates in nucleotide-sugar biosynthesis; CMP-3-deoxy-D-manno-octulosonate biosynthesis; CMP-3-deoxy-D-manno-octulosonate from 3-deoxy-D-manno-octulosonate and CTP: step 1/1. Its pathway is bacterial outer membrane biogenesis; lipopolysaccharide biosynthesis. In terms of biological role, activates KDO (a required 8-carbon sugar) for incorporation into bacterial lipopolysaccharide in Gram-negative bacteria. The chain is 3-deoxy-manno-octulosonate cytidylyltransferase from Burkholderia cenocepacia (strain HI2424).